The following is an 81-amino-acid chain: Acyl carrier protein (81 aa).

A Carrier domain is found at 2-80; it reads ASNEEILAGL…DAVSYIASAQ (79 aa). Residue Ser-40 is modified to O-(pantetheine 4'-phosphoryl)serine.

It belongs to the acyl carrier protein (ACP) family. In terms of processing, 4'-phosphopantetheine is transferred from CoA to a specific serine of apo-ACP by AcpS. This modification is essential for activity because fatty acids are bound in thioester linkage to the sulfhydryl of the prosthetic group.

It localises to the cytoplasm. Its pathway is lipid metabolism; fatty acid biosynthesis. Carrier of the growing fatty acid chain in fatty acid biosynthesis. In Renibacterium salmoninarum (strain ATCC 33209 / DSM 20767 / JCM 11484 / NBRC 15589 / NCIMB 2235), this protein is Acyl carrier protein.